We begin with the raw amino-acid sequence, 722 residues long: Probable cation-transporting ATPase HI_0290 (722 aa).

In terms of domain architecture, HMA spans Lys9–His75. Residues Cys20 and Cys23 each coordinate a metal cation. 6 consecutive transmembrane segments (helical) span residues Leu94 to Gly114, Leu118 to Ile138, Val157 to His177, His180 to Gly200, Val340 to Thr360, and Val373 to Gly393. Asp422 serves as the catalytic 4-aspartylphosphate intermediate. Transmembrane regions (helical) follow at residues Ile523–Ala543, Leu608–Ala628, Leu675–Ser695, and Ile697–Leu717. Mg(2+)-binding residues include Asp617 and Asp621.

It belongs to the cation transport ATPase (P-type) (TC 3.A.3) family. Type IB subfamily.

It localises to the cell membrane. It catalyses the reaction ATP + H2O = ADP + phosphate + H(+). The protein is Probable cation-transporting ATPase HI_0290 of Haemophilus influenzae (strain ATCC 51907 / DSM 11121 / KW20 / Rd).